Consider the following 106-residue polypeptide: uncharacterized protein (106 aa).

Disordered stretches follow at residues 33–64 (FKTSTRSTGKKRSKGSTSQDGKKQESLESRND) and 87–106 (NLTGLESGGSSPPFSLAVSK). Residues 52–63 (DGKKQESLESRN) are compositionally biased toward basic and acidic residues. Over residues 87–99 (NLTGLESGGSSPP) the composition is skewed to polar residues.

The protein resides in the mitochondrion. This is an uncharacterized protein from Arabidopsis thaliana (Mouse-ear cress).